The sequence spans 931 residues: Myocardin-related transcription factor A (931 aa).

Residues 1–256 form a mediates interaction with SCAI and ACTB region; that stretch reads MPPLKSPAAF…KQDRGAPPMD (256 aa). Residue Ser-6 is modified to Phosphoserine. The interval 6-23 is intervening spacer sequence 1; that stretch reads SPAAFHEQRRSLERARTE. Residues 24–49 form an RPEL 1 repeat; that stretch reads DYLKRKIRSRPERSELVRMHILEETS. Positions 27–65 match the Bipartite Nuclear localization signal motif; it reads KRKIRSRPERSELVRMHILEETSAEPSLQAKQLKLKRAR. Residues 50-67 are intervening spacer sequence 2; that stretch reads AEPSLQAKQLKLKRARLA. Residues 68–93 form an RPEL 2 repeat; that stretch reads DDLNEKIAQRPGPMELVEKNILPVES. 2 disordered regions span residues 110-256 and 290-344; these read ADSS…PPMD and PAPP…GALP. 3 positions are modified to phosphoserine: Ser-124, Ser-139, and Ser-156. Over residues 151-162 the composition is skewed to polar residues; it reads SATSASPTQVVS. The span at 180–189 shows a compositional bias: pro residues; that stretch reads PPLPPPPLLP. The segment covering 191-215 has biased composition (polar residues); the sequence is SLTNGTTIPTAKSTPTLIKQSQPKS. Residues 216–231 show a composition bias toward basic and acidic residues; that stretch reads ASEKSQRSKKAKELKP. Residue Thr-305 is modified to Phosphothreonine. Phosphoserine occurs at positions 310 and 312. Low complexity predominate over residues 310–320; it reads SLSTTNSSSSS. Position 313 is a phosphothreonine (Thr-313). Phosphoserine occurs at positions 317, 320, and 333. Residues 347–381 enclose the SAP domain; that stretch reads LDDMKVAELKQELKLRSLPVSGTKTELIERLRAYQ. Ser-385 and Ser-446 each carry phosphoserine. The interval 444-476 is disordered; the sequence is FGSTGSTPPVSPTPSERSLLSTGDENSTPGDTF. Thr-447 is modified (phosphothreonine). Phosphoserine is present on Ser-449. Thr-450 carries the phosphothreonine modification. At Ser-454 the chain carries Phosphoserine. Position 456 is a phosphothreonine (Thr-456). Position 458 is a phosphoserine (Ser-458). A compositionally biased stretch (polar residues) spans 459-473; that stretch reads ERSLLSTGDENSTPG. Residues Ser-482, Ser-492, Ser-507, and Ser-511 each carry the phosphoserine modification. The stretch at 515 to 563 forms a coiled coil; the sequence is RAELEGRDKDQMLQEKDKQIEALTRMLRQKQQLVERLKLQLEQEKRAQQ. Disordered regions lie at residues 558 to 577, 674 to 746, and 763 to 816; these read EKRAQQPAPAPAPLGTPVKQ, KNAD…SSSQ, and ADFK…RLED. Low complexity predominate over residues 678–694; the sequence is SPGLSSGSPQQPSSQPG. Phosphoserine is present on residues Ser-685, Ser-691, and Ser-695. Over residues 732-746 the composition is skewed to polar residues; that stretch reads MSQQPKQQENGSSSQ. Residues 763–778 are compositionally biased toward basic and acidic residues; that stretch reads ADFKEPPSLPGKEKPS. Residues 784-799 show a composition bias toward low complexity; it reads GSPLAAQPSPSAELPQ. Phosphoserine is present on residues Ser-792, Ser-807, and Ser-859.

Interacts with SRF, forming the SRF-MRTFA nuclear complex which binds the 5'-CArG-3' consensus motif (CArG box) on DNA via SRF. Interacts (via RPEL repeats) with globular actin (G-actin), thereby regulating its subcellular location and activity of the complex formed with SRF. Either forms a trivalent (by binding three G-actin monomers) or pentavalent (by binding five G-actin monomers) complex with G-actin. Forms a nuclear ternary complex with SCAI and SRF, leading to suppress MRTFA-induced SRF transcriptional activity. Interacts with beta-actin (ACTB); interaction with ACTB prevents interaction with SCAI. Interacts with MRTFB. In terms of processing, phosphorylation at Ser-6 by Erk inhibits binding of globular actin (G-actin), unmasking the nuclear localization signal (NLS) and promoting nuclear import. In terms of tissue distribution, ubiquitously expressed, has been detected in lung, placenta, small intestine, liver, kidney, spleen, thymus, colon, muscle, heart and brain. Expressed in peripheral blood mononuclear cells (at protein level).

Its subcellular location is the cytoplasm. It is found in the nucleus. In terms of biological role, transcription coactivator that associates with the serum response factor (SRF) transcription factor to control expression of genes regulating the cytoskeleton during development, morphogenesis and cell migration. The SRF-MRTFA complex activity responds to Rho GTPase-induced changes in cellular globular actin (G-actin) concentration, thereby coupling cytoskeletal gene expression to cytoskeletal dynamics. MRTFA binds G-actin via its RPEL repeats, regulating activity of the MRTFA-SRF complex. Activity is also regulated by filamentous actin (F-actin) in the nucleus. This Homo sapiens (Human) protein is Myocardin-related transcription factor A.